We begin with the raw amino-acid sequence, 414 residues long: GPI mannosyltransferase 1 (414 aa).

A run of 10 helical transmembrane segments spans residues 6-26, 87-107, 119-139, 149-171, 183-203, 213-233, 282-302, 316-336, 356-376, and 387-407; these read ISHIIVLSLLIRIGFFLFGLY, YIFMISDLITGIIILKLLSGI, IIMLSSIWLLNPMVITISTRG, IMLSLYYLINKKSIIASGFWLGL, LPSIMLYLSTSGTPFIDVPIV, FLITTLITIGAFNGIMYSIYG, MEKFVMLPQLSISALILPLLF, FAFVTFNKVITSQYFIWFLIF, IVALLLWIVSQGSWLYFAYQL, and GLLFSSFFFYISNCWILSVFI.

It belongs to the PIGM family.

It localises to the endoplasmic reticulum membrane. The protein operates within glycolipid biosynthesis; glycosylphosphatidylinositol-anchor biosynthesis. Its function is as follows. Mannosyltransferase involved in glycosylphosphatidylinositol-anchor biosynthesis. Transfers the first alpha-1,4-mannose to GlcN-acyl-PI during GPI precursor assembly. Required for cell wall integrity. This Debaryomyces hansenii (strain ATCC 36239 / CBS 767 / BCRC 21394 / JCM 1990 / NBRC 0083 / IGC 2968) (Yeast) protein is GPI mannosyltransferase 1 (GPI14).